The following is a 99-amino-acid chain: DNA-directed RNA polymerase subunit Rpo11 (99 aa).

Belongs to the archaeal Rpo11/eukaryotic RPB11/RPC19 RNA polymerase subunit family. As to quaternary structure, part of the RNA polymerase complex. Forms an Rpo3-Rpo10-Rpo11-Rpo12 complex upon coexpression.

It is found in the cytoplasm. The enzyme catalyses RNA(n) + a ribonucleoside 5'-triphosphate = RNA(n+1) + diphosphate. DNA-dependent RNA polymerase (RNAP) catalyzes the transcription of DNA into RNA using the four ribonucleoside triphosphates as substrates. This Methanocaldococcus jannaschii (strain ATCC 43067 / DSM 2661 / JAL-1 / JCM 10045 / NBRC 100440) (Methanococcus jannaschii) protein is DNA-directed RNA polymerase subunit Rpo11.